We begin with the raw amino-acid sequence, 206 residues long: Small ribosomal subunit protein uS4 (206 aa).

The 61-residue stretch at 96–156 (QRLDNVVYRM…EKSKTQARII (61 aa)) folds into the S4 RNA-binding domain.

Belongs to the universal ribosomal protein uS4 family. Part of the 30S ribosomal subunit. Contacts protein S5. The interaction surface between S4 and S5 is involved in control of translational fidelity.

Functionally, one of the primary rRNA binding proteins, it binds directly to 16S rRNA where it nucleates assembly of the body of the 30S subunit. Its function is as follows. With S5 and S12 plays an important role in translational accuracy. This is Small ribosomal subunit protein uS4 from Pseudoalteromonas translucida (strain TAC 125).